The chain runs to 539 residues: CTP synthase (539 aa).

The segment at 1 to 268 is amidoligase domain; that stretch reads MSFKSIFLTG…SDFLLNKLGF (268 aa). CTP is bound at residue S14. S14 serves as a coordination point for UTP. 15 to 20 contacts ATP; it reads SLGKGL. Y55 is an L-glutamine binding site. D72 is a binding site for ATP. Residues D72 and E142 each coordinate Mg(2+). CTP contacts are provided by residues 149–151, 188–193, and K224; these read DIE and KTKPTQ. UTP-binding positions include 188–193 and K224; that span reads KTKPTQ. Positions 294–532 constitute a Glutamine amidotransferase type-1 domain; that stretch reads RIGLVGKYLE…IRAAKAYSLE (239 aa). L-glutamine is bound at residue G353. Residue C380 is the Nucleophile; for glutamine hydrolysis of the active site. L-glutamine is bound by residues 381-384, E404, and R460; that span reads LGMQ. Catalysis depends on residues H505 and E507.

The protein belongs to the CTP synthase family. In terms of assembly, homotetramer.

It carries out the reaction UTP + L-glutamine + ATP + H2O = CTP + L-glutamate + ADP + phosphate + 2 H(+). The enzyme catalyses L-glutamine + H2O = L-glutamate + NH4(+). It catalyses the reaction UTP + NH4(+) + ATP = CTP + ADP + phosphate + 2 H(+). It functions in the pathway pyrimidine metabolism; CTP biosynthesis via de novo pathway; CTP from UDP: step 2/2. With respect to regulation, allosterically activated by GTP, when glutamine is the substrate; GTP has no effect on the reaction when ammonia is the substrate. The allosteric effector GTP functions by stabilizing the protein conformation that binds the tetrahedral intermediate(s) formed during glutamine hydrolysis. Inhibited by the product CTP, via allosteric rather than competitive inhibition. In terms of biological role, catalyzes the ATP-dependent amination of UTP to CTP with either L-glutamine or ammonia as the source of nitrogen. Regulates intracellular CTP levels through interactions with the four ribonucleotide triphosphates. This Chlamydia trachomatis serovar A (strain ATCC VR-571B / DSM 19440 / HAR-13) protein is CTP synthase.